The primary structure comprises 570 residues: Methyl-coenzyme M reductase subunit alpha (570 aa).

Residue Gln-161 coordinates coenzyme F430. Coenzyme B-binding positions include Arg-239, 270–271 (KH), and Arg-284. His-271 bears the Pros-methylhistidine mark. Residue Arg-285 is modified to 5-methylarginine. Residues Tyr-346 and Phe-464 each contribute to the coenzyme M site. Gly-465 carries the 1-thioglycine modification. The residue at position 470 (Asp-470) is a (Z)-2,3-didehydroaspartate. Cys-472 is subject to S-methylcysteine.

Belongs to the methyl-coenzyme M reductase alpha subunit family. In terms of assembly, MCR is a hexamer of two alpha, two beta, and two gamma chains, forming a dimer of heterotrimers. It depends on coenzyme F430 as a cofactor. Post-translationally, the alpha subunit contains five modified amino acids near the active site region. Is methylated on His-271, Arg-285 and Cys-472, probably by the action of specific S-adenosylmethionine-dependent methyltransferases. Also contains a thioglycine at position 465, forming a thiopeptide bond. Contains a didehydroaspartate residue at position 470. The methylation on C5 of Arg-285 is a post-translational methylation not essential in vivo, but which plays a role for the stability and structural integrity of MCR. Does not show a methylation at Gln-420, as shown for M.marburgensis.

The protein resides in the cytoplasm. It catalyses the reaction coenzyme B + methyl-coenzyme M = methane + coenzyme M-coenzyme B heterodisulfide. Its pathway is one-carbon metabolism; methyl-coenzyme M reduction; methane from methyl-coenzyme M: step 1/1. In terms of biological role, component of the methyl-coenzyme M reductase (MCR) I that catalyzes the reductive cleavage of methyl-coenzyme M (CoM-S-CH3 or 2-(methylthio)ethanesulfonate) using coenzyme B (CoB or 7-mercaptoheptanoylthreonine phosphate) as reductant which results in the production of methane and the mixed heterodisulfide of CoB and CoM (CoM-S-S-CoB). This is the final step in methanogenesis. The sequence is that of Methyl-coenzyme M reductase subunit alpha (mcrA) from Methanosarcina barkeri (strain Fusaro / DSM 804).